The following is a 366-amino-acid chain: Protein sigma-NS (366 aa).

The important for ssRNA-binding and formation of complexes stretch occupies residues 1–11 (MASSLRAAISK).

The protein belongs to the orthoreovirus sigma-NS protein family. In terms of assembly, homooligomer; in presence of RNA. Interacts with protein mu-NS; this interaction allows the localization of sigma-NS to the viral factories. Interacts with host G3BP1 (via C-terminus); this interaction induces the relocalization of G3BP1 and other SG proteins to the viral factories periphery.

The protein localises to the host cytoplasm. In terms of biological role, protein that binds to ssRNA and participates with protein mu-NS in forming the matrix of viral factories, which are large inclusions in the host cytoplasm where replication intermediates are assembled and viral RNA replication takes place. Plays a role in the inhibition of the integrated stress response (ISR) to escape from host cell translational shutoff. Participates in the disruption of stress granules (SG) through its association with host G3BP1 and mu-NS. In Mammalia (T2J), this protein is Protein sigma-NS (S3).